The primary structure comprises 86 residues: Sulmotoxin 2 (86 aa).

The first 21 residues, 1–21 (MKTLLLALAVVAFMCLDSVYP), serve as a signal peptide directing secretion. Disulfide bonds link Cys-24/Cys-47, Cys-27/Cys-35, Cys-41/Cys-62, Cys-66/Cys-77, and Cys-78/Cys-83.

Belongs to the three-finger toxin family. Ancestral subfamily. Boigatoxin sub-subfamily. Monomer. As to expression, expressed by the venom gland.

The protein resides in the secreted. In terms of biological role, probable neurotoxin. Is not toxic to mice and geckos. The protein is Sulmotoxin 2 of Spilotes sulphureus (Amazon puffing snake).